Reading from the N-terminus, the 353-residue chain is MNGDQKLDVHNQEKQNFIQHFSQIVKVLTEDELGHPEKGDAITRIKEVLEYNTVGGKYNRGLTVVQTFQELVEPRKQDAESLQRALTVGWCVELLQAFFLVLDDIMDSSYTRRGQICWYQKPGIGLDAINDALLLEAAIYRLLKFYCREQPYYLNLLELFLQSSYQTEIGQTLDLITAPQGQVDLGRYTEKRYKSIVKYKTAFYSFYLPIAAAMYMAGIDGEKEHANALKILLEMGEFFQIQDDYLDLFGDPSVTGKVGTDIQDNKCSWLVVQCLLRATPQQRQILEENYGQKDPEKVARVKALYEELDLRSVFFKYEEDSYNRLKSLIEQCSAPLPPSIFLELANKIYKRRK.

Isopentenyl diphosphate is bound by residues K57, R60, and Q96. At K57 the chain carries N6-(2-hydroxyisobutyryl)lysine; alternate. The residue at position 57 (K57) is an N6-acetyllysine; alternate. D103 and D107 together coordinate Mg(2+). A dimethylallyl diphosphate-binding site is contributed by R112. Residue R113 coordinates isopentenyl diphosphate. K200, T201, Q240, K257, and K266 together coordinate dimethylallyl diphosphate.

The protein belongs to the FPP/GGPP synthase family. In terms of assembly, homodimer. Interacts with RSAD2. Mg(2+) is required as a cofactor. In terms of tissue distribution, testis, liver, kidney, brain and adrenal gland.

It localises to the cytoplasm. It carries out the reaction isopentenyl diphosphate + dimethylallyl diphosphate = (2E)-geranyl diphosphate + diphosphate. The enzyme catalyses isopentenyl diphosphate + (2E)-geranyl diphosphate = (2E,6E)-farnesyl diphosphate + diphosphate. Its pathway is isoprenoid biosynthesis; farnesyl diphosphate biosynthesis; farnesyl diphosphate from geranyl diphosphate and isopentenyl diphosphate: step 1/1. It participates in isoprenoid biosynthesis; geranyl diphosphate biosynthesis; geranyl diphosphate from dimethylallyl diphosphate and isopentenyl diphosphate: step 1/1. Inactivated by interferon-induced RSAD2. This inactivation may result of disruption of lipid rafts at the plasma membrane, and thus have an antiviral effect since many enveloped viruses need lipid rafts to bud efficiently out of the cell. In terms of biological role, key enzyme in isoprenoid biosynthesis which catalyzes the formation of farnesyl diphosphate (FPP), a precursor for several classes of essential metabolites including sterols, dolichols, carotenoids, and ubiquinones. FPP also serves as substrate for protein farnesylation and geranylgeranylation. Catalyzes the sequential condensation of isopentenyl pyrophosphate with the allylic pyrophosphates, dimethylallyl pyrophosphate, and then with the resultant geranylpyrophosphate to the ultimate product farnesyl pyrophosphate. The chain is Farnesyl pyrophosphate synthase (Fdps) from Rattus norvegicus (Rat).